A 339-amino-acid chain; its full sequence is Senescence-specific cysteine protease SAG39 (339 aa).

The first 23 residues, 1 to 23, serve as a signal peptide directing secretion; it reads MAMAKALLFAILGCLCLCSAVLA. 3 cysteine pairs are disulfide-bonded: C144-C187, C178-C220, and C276-C328. C147 is a catalytic residue. Active-site residues include H282 and N303.

Belongs to the peptidase C1 family. As to expression, low expression in mature leaves.

Its subcellular location is the vacuole. Cysteine protease that may have a developmental senescence specific cell death function during apoptosis, heavy metal detoxification, and hypersensitive response. This is Senescence-specific cysteine protease SAG39 from Oryza sativa subsp. japonica (Rice).